The sequence spans 680 residues: GTPase Obg (680 aa).

The region spanning 2–160 (DQFIDVVSFE…LNIRLEVKLI (159 aa)) is the Obg domain. Positions 161–336 (ADIGLVGMPN…LDGDMLDKVT (176 aa)) constitute an OBG-type G domain. Residues 167–174 (GMPNTGKS), 192–196 (FTTLT), 214–217 (DIPG), 281–284 (NKTD), and 317–319 (PEI) each bind GTP. Residues Ser174 and Thr194 each contribute to the Mg(2+) site. The tract at residues 371–680 (TKRVFGPVVS…NGVLSYAVNI (310 aa)) is radical SAM domain. The 231-residue stretch at 383–613 (LGNSLGIDVI…IEIDVPSVSD (231 aa)) folds into the Radical SAM core domain. [4Fe-4S] cluster is bound by residues Cys397, Cys401, and Cys404.

It belongs to the TRAFAC class OBG-HflX-like GTPase superfamily. OBG GTPase family. In terms of assembly, monomer. Mg(2+) is required as a cofactor. The cofactor is [4Fe-4S] cluster.

It localises to the cytoplasm. An essential GTPase which binds GTP, GDP and possibly (p)ppGpp with moderate affinity, with high nucleotide exchange rates and a fairly low GTP hydrolysis rate. Plays a role in control of the cell cycle, stress response, ribosome biogenesis and in those bacteria that undergo differentiation, in morphogenesis control. In Brachyspira hyodysenteriae (strain ATCC 49526 / WA1), this protein is GTPase Obg.